The chain runs to 140 residues: Transcriptional regulator YdaT (140 aa).

Its function is as follows. Transcriptional regulator that causes a severe detrimental growth effect and reduces cell viability. When expressed, it alters expression of a variety of bacterial regulons normally controlled by the transcriptional regulatory protein RcsA, resulting in deficient lipopolysaccharide biosynthesis and cell division. YdaT has no effect on Rac prophage excision. Overexpression of ydaST reduces growth and leads to loss of cell viability. May contribute to toxicity and morphological defects. This chain is Transcriptional regulator YdaT (ydaT), found in Escherichia coli (strain K12).